Consider the following 321-residue polypeptide: Cytochrome f (321 aa).

The N-terminal stretch at 1–35 is a signal peptide; the sequence is MQNTNTLNWINKLIYLSISIPIFFLILVTTYPNSV. Residues tyrosine 38, cysteine 58, cysteine 61, and histidine 62 each coordinate heme. Residues 287–307 form a helical membrane-spanning segment; it reads MEGLILFFISVILAQVFLVLK.

Belongs to the cytochrome f family. In terms of assembly, the 4 large subunits of the cytochrome b6-f complex are cytochrome b6, subunit IV (17 kDa polypeptide, petD), cytochrome f and the Rieske protein, while the 4 small subunits are PetG, PetL, PetM and PetN. The complex functions as a dimer. Requires heme as cofactor.

Its subcellular location is the plastid. The protein localises to the chloroplast thylakoid membrane. In terms of biological role, component of the cytochrome b6-f complex, which mediates electron transfer between photosystem II (PSII) and photosystem I (PSI), cyclic electron flow around PSI, and state transitions. In Chara vulgaris (Common stonewort), this protein is Cytochrome f.